The sequence spans 185 residues: Ribosome-recycling factor (185 aa).

Belongs to the RRF family.

The protein resides in the cytoplasm. In terms of biological role, responsible for the release of ribosomes from messenger RNA at the termination of protein biosynthesis. May increase the efficiency of translation by recycling ribosomes from one round of translation to another. In Aeromonas hydrophila subsp. hydrophila (strain ATCC 7966 / DSM 30187 / BCRC 13018 / CCUG 14551 / JCM 1027 / KCTC 2358 / NCIMB 9240 / NCTC 8049), this protein is Ribosome-recycling factor.